Reading from the N-terminus, the 156-residue chain is Endogenous retrovirus group K member 6 Pro protein (156 aa).

One can recognise a Peptidase A2 domain in the interval 21–96 (FEGLVDTGAD…IPLNLWGRDL (76 aa)). D26 is a catalytic residue. One can recognise a G-patch domain in the interval 111–156 (YSPTSQKIMTKMGYIPGKGLGKNEDGIKIPVEAKINQEREGIGNPC).

It belongs to the peptidase A2 family. HERV class-II K(HML-2) subfamily. In terms of assembly, active as a homodimer. Post-translationally, autoproteolytically processed at the N-terminus. Expected C-terminal autoprocessing not detected. The sequence shown is that of the processed Pro protein.

The catalysed reaction is Processing at the authentic HIV-1 PR recognition site and release of the mature p17 matrix and the p24 capsid protein, as a result of the cleavage of the -SQNY-|-PIVQ- cleavage site.. Functionally, retroviral proteases have roles in the processing of the primary translation products and the maturation of the viral particle. Endogenous Pro proteins may have kept, lost or modified their original function during evolution. This is Endogenous retrovirus group K member 6 Pro protein (ERVK-6) from Homo sapiens (Human).